The following is a 577-amino-acid chain: Glucose-6-phosphate 1-dehydrogenase, chloroplastic (577 aa).

The segment at 1-20 (MGVQLRLNPCSSSSAATSPS) is disordered. The transit peptide at 1–63 (MGVQLRLNPC…QPRKHFEVFS (63 aa)) directs the protein to the chloroplast. Low complexity predominate over residues 11–20 (SSSSAATSPS). Residues 97-104 (GASGDLAK) and Arg131 contribute to the NADP(+) site. An intrachain disulfide couples Cys149 to Cys157. Lys234 provides a ligand contact to NADP(+). D-glucose 6-phosphate is bound by residues Lys234, 264–268 (HYLGK), Glu302, and Asp321. The active-site Proton acceptor is His326. An NADP(+)-binding site is contributed by Lys419. Residues Lys422 and Lys427 each contribute to the D-glucose 6-phosphate site. Residues Arg428, Arg432, and Arg461 each contribute to the NADP(+) site. Gln463 is a binding site for D-glucose 6-phosphate. NADP(+) is bound by residues 469 to 471 (YLK) and Arg554.

This sequence belongs to the glucose-6-phosphate dehydrogenase family. In terms of assembly, homodimer. As to expression, green tissues, leaves and chloroplasts.

Its subcellular location is the plastid. The protein localises to the chloroplast. The catalysed reaction is D-glucose 6-phosphate + NADP(+) = 6-phospho-D-glucono-1,5-lactone + NADPH + H(+). It participates in carbohydrate degradation; pentose phosphate pathway; D-ribulose 5-phosphate from D-glucose 6-phosphate (oxidative stage): step 1/3. With respect to regulation, regulated by metabolites. Post-translationally inactivated by cysteine-mediated redox modification via the ferredoxin-thioredoxin system in the light and this avoids futile cycles with photosynthetic CO2 fixation. Functionally, catalyzes the rate-limiting step of the oxidative pentose-phosphate pathway, which represents a route for the dissimilation of carbohydrates besides glycolysis. The main function of this enzyme is to provide reducing power (NADPH) and pentose phosphates for fatty acid and nucleic acid synthesis which are involved in membrane synthesis and cell division. The chain is Glucose-6-phosphate 1-dehydrogenase, chloroplastic from Solanum tuberosum (Potato).